The primary structure comprises 60 residues: DNA-directed RNA polymerase subunit Rpo6 (60 aa).

This sequence belongs to the archaeal Rpo6/eukaryotic RPB6 RNA polymerase subunit family. As to quaternary structure, part of the RNA polymerase complex.

The protein resides in the cytoplasm. It carries out the reaction RNA(n) + a ribonucleoside 5'-triphosphate = RNA(n+1) + diphosphate. In terms of biological role, DNA-dependent RNA polymerase (RNAP) catalyzes the transcription of DNA into RNA using the four ribonucleoside triphosphates as substrates. This Methanosarcina acetivorans (strain ATCC 35395 / DSM 2834 / JCM 12185 / C2A) protein is DNA-directed RNA polymerase subunit Rpo6.